The primary structure comprises 511 residues: ADP,ATP carrier protein 4 (511 aa).

A run of 12 helical transmembrane segments spans residues 34-54 (VSKF…QNLI), 71-91 (ISFL…AIYV), 102-122 (IFYL…YVIF), 157-177 (FSLF…LLFW), 192-212 (FYPL…QFLE), 231-251 (FHTL…IIAI), 296-316 (LIAT…GPWK), 330-350 (AAFI…FVVL), 361-381 (FTAA…FFAV), 390-410 (LIIA…IGAI), 453-473 (LGKS…PSAS), and 476-496 (SISI…LWAT).

Belongs to the ADP/ATP translocase tlc family.

It localises to the cell membrane. Functionally, provides the rickettsial cell with host ATP in exchange for rickettsial ADP. This is an obligate exchange system. This energy acquiring activity is an important component of rickettsial parasitism. This Rickettsia felis (strain ATCC VR-1525 / URRWXCal2) (Rickettsia azadi) protein is ADP,ATP carrier protein 4 (tlcD).